A 57-amino-acid polypeptide reads, in one-letter code: High light-inducible protein HliD (57 aa).

The Chlorophyll-binding motif signature appears at 25 to 30; sequence EKLNGR. Residues 25–46 traverse the membrane as a helical segment; that stretch reads EKLNGRAAMVGFLLILVIEYFT.

It belongs to the Hlip family. As to quaternary structure, probably forms dimers which bind 6 chlorophyll a and 2 beta-carotenoid molecules. Cofractionates in an approximately 50 kDa fraction of the thylakoid membrane with HliC. Does not associate with mature PSII. Purified in several chlorophyll- and carotenoid-containing complexes, including photosystem II (PSII) assembly intermediate complex RCII* (iD1, D1, D2, PsbE, PsbF, PsbI, Ycf39, Ycf48, HliC and HliD) and the Ycf39-Hlip complex (Ycf39, HliC, HliD and pigments).

The protein resides in the cellular thylakoid membrane. Involved in photosystem II (PSII) assembly and/or repair under high light stress. Required for binding of chlorophyll and carotenoids by the Ycf39-Hlip complex. The Ycf39-Hlip complex binds D1 at an early stage of PSII assembly along with Ycf48, ribosomes and ChlG, the last enzyme in chlorophyll biosynthesis; it may be involved in chlorophyll reuse and delivery to D1 in the initial stages of PSII assembly. Binds chlorophyll a and beta-carotenoid in a 3:1 stoichiometry in the presence and absence of Yfc39; in the Ycf39-HliC-HliD complex, HliD binds all the pigment. The Ycf39-Hlip complex efficiently quenches chlorophyll fluorescence, contributing to photoprotection. Deletion of 4 to 5 members of the Hlip family suggests the proteins are involved in regulation of chlorophyll biosynthesis, in stabilization of chlorophyll-binding proteins and/or in reuse of chlorophylls, and may regulate tetrapyrrole biosynthesis. Might bind chlorophyll and/or carotenoids in association with HliC (called the ScpBE pair). Functionally, the Hlips might regulate tetrapyrrole biosynthesis, maybe at the level of aminolevulinic acid synthesis and probably stabilize PSII assembly intermediates. In Synechocystis sp. (strain ATCC 27184 / PCC 6803 / Kazusa), this protein is High light-inducible protein HliD (hliD).